Consider the following 217-residue polypeptide: Ufm1-specific protease 1 (217 aa).

Active-site residues include cysteine 53, aspartate 175, and histidine 177.

The protein belongs to the peptidase C78 family. As to expression, widely expressed. Expressed at higher level in brain, heart, kidney and skeletal muscle.

The protein localises to the cytoplasm. Its subcellular location is the cytosol. In terms of biological role, thiol-dependent isopeptidase that specifically mediate the processing of UFM1 precursors as well as the deconjugation of UFM1 from target proteins. Mainly responsible for the maturation of the UFM1 precursor, a prerequisite for conjugation reactions. In Mus musculus (Mouse), this protein is Ufm1-specific protease 1.